A 143-amino-acid polypeptide reads, in one-letter code: Transcriptional regulator MraZ (143 aa).

2 SpoVT-AbrB domains span residues 5-47 (EYQH…PLNE) and 76-119 (ATEC…SDER).

The protein belongs to the MraZ family. Forms oligomers.

It is found in the cytoplasm. The protein localises to the nucleoid. The chain is Transcriptional regulator MraZ from Enterococcus faecalis (strain ATCC 700802 / V583).